Here is a 128-residue protein sequence, read N- to C-terminus: uncharacterized protein (128 aa).

A helical transmembrane segment spans residues Tyr-8 to Tyr-28.

Its subcellular location is the membrane. This is an uncharacterized protein from Haemophilus influenzae (strain ATCC 51907 / DSM 11121 / KW20 / Rd).